The following is a 427-amino-acid chain: Adenylosuccinate synthetase (427 aa).

GTP-binding positions include 12-18 (GDEGKGK) and 40-42 (GHT). Asp13 serves as the catalytic Proton acceptor. Residues Asp13 and Gly40 each coordinate Mg(2+). Residues 13–16 (DEGK), 38–41 (NAGH), Thr128, Arg142, Gln223, Thr238, and Arg302 each bind IMP. The Proton donor role is filled by His41. Residue 298–304 (TVTGRAR) participates in substrate binding. Residues Arg304, 330-332 (RLD), and 412-414 (SVG) each bind GTP.

It belongs to the adenylosuccinate synthetase family. As to quaternary structure, homodimer. Mg(2+) is required as a cofactor.

Its subcellular location is the cytoplasm. The catalysed reaction is IMP + L-aspartate + GTP = N(6)-(1,2-dicarboxyethyl)-AMP + GDP + phosphate + 2 H(+). The protein operates within purine metabolism; AMP biosynthesis via de novo pathway; AMP from IMP: step 1/2. Functionally, plays an important role in the de novo pathway of purine nucleotide biosynthesis. Catalyzes the first committed step in the biosynthesis of AMP from IMP. The sequence is that of Adenylosuccinate synthetase from Brachyspira hyodysenteriae (strain ATCC 49526 / WA1).